Here is a 607-residue protein sequence, read N- to C-terminus: Ceramide kinase (607 aa).

Positions 135-358 constitute a DAGKc domain; it reads DRPKSLMVFV…LDIAQVVRWK (224 aa). Residues 145-149, threonine 176, and 205-211 each bind ATP; these read HPLCG and GDGLFNE. 204-207 contacts substrate; sequence GGDG. The active-site Proton donor/acceptor is the aspartate 206. Residues 247–297 are disordered; it reads NDLSNSELTGDDANAISGSSNTPDDHEPLLSTTRSTGLDISSSDSSDEPCN. Over residues 276 to 286 the composition is skewed to polar residues; the sequence is LSTTRSTGLDI. Serine 320 provides a ligand contact to ATP. Residues 454 to 461 carry the CXXXCXXC motif; it reads CRTNCLIC.

Requires Ca(2+) as cofactor. The cofactor is Mg(2+). As to expression, highly expressed in leaves and at lower levels in stems.

The enzyme catalyses an N-acylsphing-4-enine + ATP = an N-acylsphing-4-enine 1-phosphate + ADP + H(+). Functionally, catalyzes specifically the phosphorylation of ceramide to form ceramide 1-phosphate. Possesses activity on ceramide analog (C6 synthetic ceramide) in vitro. Ceramide is a critical sphingolipid metabolite that induces programmed cell death (PCD) in plants and ceramide-1-phosphate has a PCD suppressive effect. Thus, ceramide phosphorylation plays a role in the modulation of PCD and CERK activity is crucial for the maintenance of cell viability. The polypeptide is Ceramide kinase (CERK) (Oryza sativa subsp. japonica (Rice)).